Reading from the N-terminus, the 95-residue chain is Large ribosomal subunit protein bL25 (95 aa).

Belongs to the bacterial ribosomal protein bL25 family. In terms of assembly, part of the 50S ribosomal subunit; part of the 5S rRNA/L5/L18/L25 subcomplex. Contacts the 5S rRNA. Binds to the 5S rRNA independently of L5 and L18.

This is one of the proteins that binds to the 5S RNA in the ribosome where it forms part of the central protuberance. The sequence is that of Large ribosomal subunit protein bL25 from Aeromonas salmonicida (strain A449).